The primary structure comprises 475 residues: Adenosylhomocysteinase (475 aa).

Residues Thr66, Asp141, and Glu201 each contribute to the substrate site. Residue 202-204 (TTT) participates in NAD(+) binding. The substrate site is built by Lys231 and Asp235. NAD(+) contacts are provided by residues Asn236, 265–270 (GYGEVG), Glu288, Asn323, 344–346 (IGH), and Asn389.

It belongs to the adenosylhomocysteinase family. NAD(+) is required as a cofactor.

It localises to the cytoplasm. It carries out the reaction S-adenosyl-L-homocysteine + H2O = L-homocysteine + adenosine. It functions in the pathway amino-acid biosynthesis; L-homocysteine biosynthesis; L-homocysteine from S-adenosyl-L-homocysteine: step 1/1. May play a key role in the regulation of the intracellular concentration of adenosylhomocysteine. In Geobacter sulfurreducens (strain ATCC 51573 / DSM 12127 / PCA), this protein is Adenosylhomocysteinase.